Consider the following 264-residue polypeptide: Thiazole synthase (264 aa).

Lysine 106 (schiff-base intermediate with DXP) is an active-site residue. Residues glycine 167, 193 to 194 (AG), and 215 to 216 (NT) each bind 1-deoxy-D-xylulose 5-phosphate.

This sequence belongs to the ThiG family. Homotetramer. Forms heterodimers with either ThiH or ThiS.

It is found in the cytoplasm. It catalyses the reaction [ThiS sulfur-carrier protein]-C-terminal-Gly-aminoethanethioate + 2-iminoacetate + 1-deoxy-D-xylulose 5-phosphate = [ThiS sulfur-carrier protein]-C-terminal Gly-Gly + 2-[(2R,5Z)-2-carboxy-4-methylthiazol-5(2H)-ylidene]ethyl phosphate + 2 H2O + H(+). It participates in cofactor biosynthesis; thiamine diphosphate biosynthesis. Functionally, catalyzes the rearrangement of 1-deoxy-D-xylulose 5-phosphate (DXP) to produce the thiazole phosphate moiety of thiamine. Sulfur is provided by the thiocarboxylate moiety of the carrier protein ThiS. In vitro, sulfur can be provided by H(2)S. The sequence is that of Thiazole synthase from Xanthomonas axonopodis pv. citri (strain 306).